Here is a 202-residue protein sequence, read N- to C-terminus: Peptide deformylase 2 (202 aa).

Fe cation is bound by residues C123 and H165. E166 is an active-site residue. H169 is a Fe cation binding site.

The protein belongs to the polypeptide deformylase family. The cofactor is Fe(2+).

The catalysed reaction is N-terminal N-formyl-L-methionyl-[peptide] + H2O = N-terminal L-methionyl-[peptide] + formate. In terms of biological role, removes the formyl group from the N-terminal Met of newly synthesized proteins. Requires at least a dipeptide for an efficient rate of reaction. N-terminal L-methionine is a prerequisite for activity but the enzyme has broad specificity at other positions. This is Peptide deformylase 2 from Vibrio vulnificus (strain YJ016).